The primary structure comprises 476 residues: Ribulose bisphosphate carboxylase large chain (476 aa).

The substrate site is built by N124 and T174. K176 functions as the Proton acceptor in the catalytic mechanism. K178 provides a ligand contact to substrate. The Mg(2+) site is built by K202, D204, and E205. K202 carries the post-translational modification N6-carboxylysine. The active-site Proton acceptor is H295. 3 residues coordinate substrate: R296, H328, and S380.

It belongs to the RuBisCO large chain family. Type I subfamily. As to quaternary structure, heterohexadecamer of 8 large chains and 8 small chains; disulfide-linked. The disulfide link is formed within the large subunit homodimers. Mg(2+) serves as cofactor. In terms of processing, the disulfide bond which can form in the large chain dimeric partners within the hexadecamer appears to be associated with oxidative stress and protein turnover.

The protein resides in the carboxysome. The enzyme catalyses 2 (2R)-3-phosphoglycerate + 2 H(+) = D-ribulose 1,5-bisphosphate + CO2 + H2O. It catalyses the reaction D-ribulose 1,5-bisphosphate + O2 = 2-phosphoglycolate + (2R)-3-phosphoglycerate + 2 H(+). RuBisCO catalyzes two reactions: the carboxylation of D-ribulose 1,5-bisphosphate, the primary event in carbon dioxide fixation, as well as the oxidative fragmentation of the pentose substrate in the photorespiration process. Both reactions occur simultaneously and in competition at the same active site. The protein is Ribulose bisphosphate carboxylase large chain of Trichodesmium erythraeum (strain IMS101).